The sequence spans 110 residues: Large ribosomal subunit protein P2 (110 aa).

The interval 63–110 (ASVPSGGGVAAAAPAAGGGGADPAEAKEEKKEEPEEESDDDMGFGLFD) is disordered. A compositionally biased stretch (basic and acidic residues) spans 86-95 (AEAKEEKKEE).

The protein belongs to the eukaryotic ribosomal protein P1/P2 family. P1 and P2 exist as dimers at the large ribosomal subunit. Phosphorylated.

Functionally, plays an important role in the elongation step of protein synthesis. The sequence is that of Large ribosomal subunit protein P2 from Cryptochiton stelleri (Giant gumboot chiton).